Consider the following 466-residue polypeptide: MATIPGGGTIMDPMHLYRARRDKERRGVLKTYKILGFISSGTYGRVYKAVLLPPPKTASAKSALPSSTRAALSLPKDKLPSPSFTEDSDPLNNPEMCMRPGDRPAKRGDVFAIKKFKPDKEGDVLTYAGISQSGAREIMLNRELHHRNLVSLREVILEDKSIYMVFEYAEHDFLQIIHYHSQTARASIPPSTLRRLLHQLLCGVHFLHSNFVLHRDLKPANILVTSQGVVKIGDLGLARLWHKPLAQQGLYGGDKVVVTIWYRAPELILGAKHYTAAVDIWAVGCIYAELLSLRPIFKGDEAKMDGKKSLPFQRDQMGKICEVLGPVKPEQWPGIVHMPEYRTYQATGPYPHSNPLAPWYHARSNSSEGYDILVKMFEWDPARRITARDALRHPWFQEEGGVDTKSVFEGSSITYPTRRVTHEDNGDAKMGSLPQSMAGGRLPSSSNFRPASGNIVQPAARKKARI.

In terms of domain architecture, Protein kinase spans 32–396 (YKILGFISSG…ARDALRHPWF (365 aa)). Position 38–46 (38–46 (ISSGTYGRV)) interacts with ATP. The disordered stretch occupies residues 58 to 105 (ASAKSALPSSTRAALSLPKDKLPSPSFTEDSDPLNNPEMCMRPGDRPA). K114 contacts ATP. D216 serves as the catalytic Proton acceptor. The segment at 421–466 (THEDNGDAKMGSLPQSMAGGRLPSSSNFRPASGNIVQPAARKKARI) is disordered.

This sequence belongs to the protein kinase superfamily. CMGC Ser/Thr protein kinase family. CDC2/CDKX subfamily. In terms of assembly, component of the SRB8-11 complex, a regulatory module of the Mediator complex. It depends on Mg(2+) as a cofactor.

It localises to the nucleus. The enzyme catalyses L-seryl-[protein] + ATP = O-phospho-L-seryl-[protein] + ADP + H(+). The catalysed reaction is L-threonyl-[protein] + ATP = O-phospho-L-threonyl-[protein] + ADP + H(+). It catalyses the reaction [DNA-directed RNA polymerase] + ATP = phospho-[DNA-directed RNA polymerase] + ADP + H(+). In terms of biological role, component of the SRB8-11 complex. The SRB8-11 complex is a regulatory module of the Mediator complex which is itself involved in regulation of basal and activated RNA polymerase II-dependent transcription. The SRB8-11 complex may be involved in the transcriptional repression of a subset of genes regulated by Mediator. It may inhibit the association of the Mediator complex with RNA polymerase II to form the holoenzyme complex. The SRB8-11 complex phosphorylates the C-terminal domain (CTD) of the largest subunit of RNA polymerase II. The polypeptide is Serine/threonine-protein kinase SSN3 (SSN3) (Cryptococcus neoformans var. neoformans serotype D (strain B-3501A) (Filobasidiella neoformans)).